Here is a 342-residue protein sequence, read N- to C-terminus: (Lyso)-N-acylphosphatidylethanolamine lipase (342 aa).

The region spanning Pro70 to Ala324 is the AB hydrolase-1 domain.

The protein belongs to the peptidase S33 family. ABHD4/ABHD5 subfamily.

It catalyses the reaction N-hexadecanoyl-1,2-di-(9Z-octadecenoyl)-sn-glycero-3-phosphoethanolamine + H2O = N-hexadecanoyl-1-(9Z-octadecenoyl)-sn-glycero-3-phosphoethanolamine + (9Z)-octadecenoate + H(+). It carries out the reaction an N-acyl-1,2-diacyl-sn-glycero-3-phosphoethanolamine + H2O = N,1-diacyl-sn-glycero-3-phosphoethanolamine + a fatty acid + H(+). The catalysed reaction is N-hexadecanoyl-1-(9Z-octadecenoyl)-sn-glycero-3-phosphoethanolamine + H2O = N-hexadecanoyl-sn-glycero-3-phosphoethanolamine + (9Z)-octadecenoate + H(+). The enzyme catalyses N-octadecanoyl-1-(9Z-octadecenoyl)-sn-glycero-3-phosphoethanolamine + H2O = N-octadecanoyl-sn-glycero-3-phospho-ethanolamine + (9Z)-octadecenoate + H(+). It catalyses the reaction N-eicosanoyl-1-(9Z-octadecenoyl)-sn-glycero-3-phosphoethanolamine + H2O = N-eicosanoyl-sn-glycero-3-phosphoethanolamine + (9Z)-octadecenoate + H(+). It carries out the reaction N,1-di-(9Z-octadecenoyl)-sn-glycero-3-phosphoethanolamine + H2O = N-(9Z-octadecenoyl)-sn-glycero-3-phosphoethanolamine + (9Z)-octadecenoate + H(+). The catalysed reaction is N-(5Z,8Z,11Z,14Z-eicosatetraenoyl)-1-(9Z-octadecenoyl)-sn-glycero-3-phosphoethanolamine + H2O = N-(5Z,8Z,11Z,14Z-eicosatetraenoyl)-sn-glycero-3-phosphoethanolamine + (9Z)-octadecenoate + H(+). The enzyme catalyses 1-octadecanoyl-2-(9Z-octadecenoyl)-sn-glycero-3-phospho-(N-hexadecanoyl)-serine + H2O = 1-octadecanoyl-2-hydroxy-sn-glycero-3-phospho-(N-hexadecanoyl)-serine + (9Z)-octadecenoate + H(+). It catalyses the reaction 1-O-(1Z-octadecenoyl)-2-(9Z-octadecenoyl)-sn-glycero-3-phospho-N-hexadecanoyl-ethanolamine + H2O = 1-O-(1Z-octadecenyl)-sn-glycero-3-phospho-N-hexadecanoyl-ethanolamine + (9Z)-octadecenoate + H(+). It carries out the reaction N,1-diacyl-sn-glycero-3-phosphoethanolamine + H2O = N-acyl-sn-glycero-3-phosphoethanolamine + a fatty acid + H(+). In terms of biological role, lysophospholipase selective for N-acyl phosphatidylethanolamine (NAPE). Contributes to the biosynthesis of N-acyl ethanolamines, including the endocannabinoid anandamide by hydrolyzing the sn-1 and sn-2 acyl chains from N-acyl phosphatidylethanolamine (NAPE) generating glycerophospho-N-acyl ethanolamine (GP-NAE), an intermediate for N-acyl ethanolamine biosynthesis. Hydrolyzes substrates bearing saturated, monounsaturated, polyunsaturated N-acyl chains. Shows no significant activity towards other lysophospholipids, including lysophosphatidylcholine, lysophosphatidylethanolamine and lysophosphatidylserine. In Bos taurus (Bovine), this protein is (Lyso)-N-acylphosphatidylethanolamine lipase.